We begin with the raw amino-acid sequence, 162 residues long: MSETQVTWLTQDAFDRLKSELDELVGNRPVIAAKINEAREEGDLKENGGYHAAREEQGHLESRIRQLQELLRTAKVGDVPTEAGVAKPGSVLTVRYDDEDETEKFLLATREEGAHGDLEVYSPSSPLGQALLDAKEGETREYELPNGGTMKVTLVKAEPFTG.

Residues 50 to 75 (YHAAREEQGHLESRIRQLQELLRTAK) adopt a coiled-coil conformation.

Belongs to the GreA/GreB family.

Necessary for efficient RNA polymerase transcription elongation past template-encoded arresting sites. The arresting sites in DNA have the property of trapping a certain fraction of elongating RNA polymerases that pass through, resulting in locked ternary complexes. Cleavage of the nascent transcript by cleavage factors such as GreA or GreB allows the resumption of elongation from the new 3'terminus. GreA releases sequences of 2 to 3 nucleotides. The chain is Transcription elongation factor GreA from Saccharopolyspora erythraea (strain ATCC 11635 / DSM 40517 / JCM 4748 / NBRC 13426 / NCIMB 8594 / NRRL 2338).